The sequence spans 480 residues: MNVLSVSSEIYPLIKTGGLADVVGALPIALEAHGVRTRTLIPGYPAVKAAVTDPVKCFEFTDLLGEKADLLEVQHERLDLLILDAPAYYERSGGPYLGQTGKDYPDNWKRFAALSLAAARIGAGVLPGWRPDMVHAHDWQAAMTPVYMRYAETPEIPSLLTIHNIAFQGQFGANIFSKLALPAHAFGMEGIEYYNDVSFLKGGLQTATALSTVSPSYAEEILTAEFGMGLEGVIGSRAHVLHGIVNGIDADVWNPATDHLIHDNYSAANLKNRALNKKAVAEHFRIDDDGSPLFCVISRLTWQKGIDLMAEAVDEIVSLGGRLVVLGAGDVALEGALLAAASRHHGRVGVAIGYNEPLSHLMQAGCDAIIIPSRFEPCGLTQLYALRYGCIPVVARTGGLADTVIDANHAALASKAATGVQFSPVTLDGLKQAIRRTVRYYHDPKLWTQMQKLGMKSDVSWEKSAGLYAALYSQLISKGH.

Residue Lys-15 participates in ADP-alpha-D-glucose binding.

It belongs to the glycosyltransferase 1 family. Bacterial/plant glycogen synthase subfamily.

It catalyses the reaction [(1-&gt;4)-alpha-D-glucosyl](n) + ADP-alpha-D-glucose = [(1-&gt;4)-alpha-D-glucosyl](n+1) + ADP + H(+). The protein operates within glycan biosynthesis; glycogen biosynthesis. In terms of biological role, synthesizes alpha-1,4-glucan chains using ADP-glucose. The protein is Glycogen synthase 1 (glgA1) of Rhizobium radiobacter (Agrobacterium tumefaciens).